Here is a 157-residue protein sequence, read N- to C-terminus: Small ribosomal subunit protein uS7 (157 aa).

This sequence belongs to the universal ribosomal protein uS7 family. Part of the 30S ribosomal subunit. Contacts proteins S9 and S11.

Its function is as follows. One of the primary rRNA binding proteins, it binds directly to 16S rRNA where it nucleates assembly of the head domain of the 30S subunit. Is located at the subunit interface close to the decoding center, probably blocks exit of the E-site tRNA. The polypeptide is Small ribosomal subunit protein uS7 (Polaromonas sp. (strain JS666 / ATCC BAA-500)).